The primary structure comprises 334 residues: Anthranilate phosphoribosyltransferase (334 aa).

5-phospho-alpha-D-ribose 1-diphosphate contacts are provided by residues glycine 79, 82-83, serine 87, 89-92, 107-115, and serine 119; these read GD, NIST, and KAGNRSISS. Anthranilate is bound at residue glycine 79. Serine 91 is a binding site for Mg(2+). Asparagine 110 provides a ligand contact to anthranilate. Arginine 165 contacts anthranilate. Residues aspartate 224 and glutamate 225 each contribute to the Mg(2+) site.

Belongs to the anthranilate phosphoribosyltransferase family. As to quaternary structure, homodimer. Requires Mg(2+) as cofactor.

It carries out the reaction N-(5-phospho-beta-D-ribosyl)anthranilate + diphosphate = 5-phospho-alpha-D-ribose 1-diphosphate + anthranilate. Its pathway is amino-acid biosynthesis; L-tryptophan biosynthesis; L-tryptophan from chorismate: step 2/5. Functionally, catalyzes the transfer of the phosphoribosyl group of 5-phosphorylribose-1-pyrophosphate (PRPP) to anthranilate to yield N-(5'-phosphoribosyl)-anthranilate (PRA). This Streptococcus thermophilus (strain ATCC BAA-250 / LMG 18311) protein is Anthranilate phosphoribosyltransferase.